The sequence spans 497 residues: Maintenance of mitochondrial morphology protein 1 (497 aa).

Residues 1-28 (MSSVLNPSSPHSWDLCCSSSSNRSYHRP) are Lumenal-facing. The helical transmembrane segment at 29-55 (THPIVGLLVGQLSVVLLIGAFIKFFIF) threads the bilayer. At 56-497 (GEAPPSPSRS…GSLPDAVPIT (442 aa)) the chain is on the cytoplasmic side. 4 disordered regions span residues 60–107 (PSPS…SSST), 284–330 (ESST…STTG), 402–421 (TGVR…AAGV), and 437–497 (EMLH…VPIT). The span at 66–77 (QTHRTSQHKRSY) shows a compositional bias: basic residues. Basic and acidic residues predominate over residues 81-94 (GARDLSPRTLKEKP). Polar residues-rich tracts occupy residues 95-107 (SSNV…SSST), 284-302 (ESST…NLRS), and 311-330 (PQES…STTG). The region spanning 140–393 (QPESLDWFNV…EPRVQVVALP (254 aa)) is the SMP-LTD domain. The segment covering 412 to 421 (DVSSSDAAGV) has biased composition (low complexity). Over residues 440–451 (HAAREVDAEGLR) the composition is skewed to basic and acidic residues. Polar residues predominate over residues 462–473 (GSSSKYAQQNQS). A compositionally biased stretch (basic and acidic residues) spans 474–484 (SRERGRADDPF).

Belongs to the MMM1 family. As to quaternary structure, homodimer. Component of the ER-mitochondria encounter structure (ERMES) or MDM complex, composed of MMM1, MDM10, MDM12 and MDM34. An MMM1 homodimer associates with one molecule of MDM12 on each side in a pairwise head-to-tail manner, and the SMP-LTD domains of MMM1 and MDM12 generate a continuous hydrophobic tunnel for phospholipid trafficking.

The protein resides in the endoplasmic reticulum membrane. In terms of biological role, component of the ERMES/MDM complex, which serves as a molecular tether to connect the endoplasmic reticulum (ER) and mitochondria. Components of this complex are involved in the control of mitochondrial shape and protein biogenesis, and function in nonvesicular lipid trafficking between the ER and mitochondria. The MDM12-MMM1 subcomplex functions in the major beta-barrel assembly pathway that is responsible for biogenesis of all outer membrane beta-barrel proteins, and acts in a late step after the SAM complex. The MDM10-MDM12-MMM1 subcomplex further acts in the TOM40-specific pathway after the action of the MDM12-MMM1 complex. Essential for establishing and maintaining the structure of mitochondria and maintenance of mtDNA nucleoids. The sequence is that of Maintenance of mitochondrial morphology protein 1 from Uncinocarpus reesii (strain UAMH 1704).